The sequence spans 148 residues: uncharacterized protein (148 aa).

Residues 1–11 (MKPRNINNSLP) are compositionally biased toward polar residues. The disordered stretch occupies residues 1–31 (MKPRNINNSLPLQPLVPDQENKNKKNEEKSV). Basic and acidic residues predominate over residues 19–30 (QENKNKKNEEKS).

This is an uncharacterized protein from Escherichia coli (strain K12).